The sequence spans 317 residues: Heme-binding protein HMX1 (317 aa).

Residues 1-289 (MEDSSNTIIP…FNKDSATRRA (289 aa)) are Cytoplasmic-facing. Residues 290–310 (LHTVMLLVLSIIAIWVLYFLV) traverse the membrane as a helical; Anchor for type IV membrane protein segment.

Requires heme as cofactor.

It is found in the endoplasmic reticulum membrane. Functionally, plays an important role in the degradation of heme under conditions of iron deprivation. The sequence is that of Heme-binding protein HMX1 (HMX1) from Saccharomyces cerevisiae (strain ATCC 204508 / S288c) (Baker's yeast).